A 166-amino-acid chain; its full sequence is Cytochrome c-type biogenesis protein CcmE (166 aa).

At 1–13 the chain is on the cytoplasmic side; the sequence is MNFLPKSRKARRR. Residues 14-34 traverse the membrane as a helical; Signal-anchor for type II membrane protein segment; the sequence is LTILAVAAPVVALAVGLALWG. The Periplasmic segment spans residues 35 to 166; it reads MRDAISLFYT…QGYKPGKPNT (132 aa). Histidine 128 and tyrosine 132 together coordinate heme. The tract at residues 143 to 166 is disordered; sequence EQGEWRGDGQAPSYQGYKPGKPNT.

This sequence belongs to the CcmE/CycJ family.

The protein resides in the cell inner membrane. Functionally, heme chaperone required for the biogenesis of c-type cytochromes. Transiently binds heme delivered by CcmC and transfers the heme to apo-cytochromes in a process facilitated by CcmF and CcmH. This Caulobacter sp. (strain K31) protein is Cytochrome c-type biogenesis protein CcmE.